A 178-amino-acid chain; its full sequence is Peptide methionine sulfoxide reductase MsrA (178 aa).

The active site involves Cys-14.

Belongs to the MsrA Met sulfoxide reductase family.

It catalyses the reaction L-methionyl-[protein] + [thioredoxin]-disulfide + H2O = L-methionyl-(S)-S-oxide-[protein] + [thioredoxin]-dithiol. The catalysed reaction is [thioredoxin]-disulfide + L-methionine + H2O = L-methionine (S)-S-oxide + [thioredoxin]-dithiol. Has an important function as a repair enzyme for proteins that have been inactivated by oxidation. Catalyzes the reversible oxidation-reduction of methionine sulfoxide in proteins to methionine. In Bacillus pumilus (strain SAFR-032), this protein is Peptide methionine sulfoxide reductase MsrA.